We begin with the raw amino-acid sequence, 225 residues long: LysM and putative peptidoglycan-binding domain-containing protein 1 (225 aa).

2 positions are modified to phosphoserine: Ser23 and Ser33. Residues 40-84 (LEHQLAPGDTLAGLALKYGVTMEQIKRANRLYTNDSIFLKKTLHI) form the LysM domain. Positions 97 to 153 (LDSEEEKDGEEAVQPSKDEVRPHSAERKKRERGLGHANGEPLPTAGQEPARHDLSAS) are disordered. Over residues 98-107 (DSEEEKDGEE) the composition is skewed to acidic residues. Position 99 is a phosphoserine (Ser99). A compositionally biased stretch (basic and acidic residues) spans 112–121 (SKDEVRPHSA). A phosphoserine mark is found at Ser164, Ser179, Ser192, and Ser210. The disordered stretch occupies residues 170 to 225 (AAQKLKKGESGIPGEDSSLHLSSPRMQQRAVLGPVPLTQTSRTRTLRDQEDEIFKL). A compositionally biased stretch (basic and acidic residues) spans 214 to 225 (TLRDQEDEIFKL).

The polypeptide is LysM and putative peptidoglycan-binding domain-containing protein 1 (LYSMD1) (Bos taurus (Bovine)).